Consider the following 226-residue polypeptide: Urease accessory protein UreG (226 aa).

The tract at residues 1–26 is disordered; that stretch reads MPPHFLDGQPHGHTDRPRRVRQPGEP. 33–40 contacts GTP; the sequence is GPVGSGKT.

It belongs to the SIMIBI class G3E GTPase family. UreG subfamily. As to quaternary structure, homodimer. UreD, UreF and UreG form a complex that acts as a GTP-hydrolysis-dependent molecular chaperone, activating the urease apoprotein by helping to assemble the nickel containing metallocenter of UreC. The UreE protein probably delivers the nickel.

The protein localises to the cytoplasm. In terms of biological role, facilitates the functional incorporation of the urease nickel metallocenter. This process requires GTP hydrolysis, probably effectuated by UreG. In Mycolicibacterium vanbaalenii (strain DSM 7251 / JCM 13017 / BCRC 16820 / KCTC 9966 / NRRL B-24157 / PYR-1) (Mycobacterium vanbaalenii), this protein is Urease accessory protein UreG.